The following is a 391-amino-acid chain: Small ribosomal subunit protein bS1 (391 aa).

S1 motif domains lie at 16–90 (GDKV…LSRR), 108–173 (NEII…LSRK), 194–262 (GDVI…LSIK), and 279–348 (NDVI…LSIK).

Belongs to the bacterial ribosomal protein bS1 family.

Its function is as follows. Binds mRNA; thus facilitating recognition of the initiation point. It is needed to translate mRNA with a short Shine-Dalgarno (SD) purine-rich sequence. This chain is Small ribosomal subunit protein bS1 (rpsA), found in Staphylococcus aureus (strain MSSA476).